The chain runs to 176 residues: Epididymal-specific lipocalin-9 (176 aa).

An N-terminal signal peptide occupies residues 1-15 (MALLLLSLGLSLIAA). N-linked (GlcNAc...) asparagine glycans are attached at residues N68 and N129. A disulfide bridge connects residues C83 and C161.

Belongs to the calycin superfamily. Lipocalin family.

The protein localises to the secreted. The polypeptide is Epididymal-specific lipocalin-9 (Homo sapiens (Human)).